Reading from the N-terminus, the 943-residue chain is Sodium- and chloride-dependent GABA transporter ine (943 aa).

Topologically, residues 1-345 (MAENKDVSQV…RQQHWANKMQ (345 aa)) are cytoplasmic. Residues 103–122 (HKQSPLRHTSVRTRPSSEVL) form a disordered region. Helical transmembrane passes span 346–366 (FVLA…FPYM), 373–393 (GVFL…LLFM), and 418–438 (GAGL…SVII). Over 439 to 510 (GYSIYYFFTS…GLEYPGMMRW (72 aa)) the chain is Extracellular. Asn476 carries N-linked (GlcNAc...) asparagine glycosylation. The next 9 helical transmembrane spans lie at 511–531 (ELFA…WKSI), 539–559 (YFTA…AVTL), 591–607 (FNSL…FASY), 618–638 (TVAV…FAFS), 679–699 (WAVM…FAIV), 723–743 (IVVL…IIQG), 754–774 (YAAS…IAWF), 799–819 (CWLV…LINY), and 836–856 (YGIG…YAVI). The Cytoplasmic portion of the chain corresponds to 857–943 (NFLRSSGDTF…HAEAGGPCGQ (87 aa)).

This sequence belongs to the sodium:neurotransmitter symporter (SNF) (TC 2.A.22) family. In terms of tissue distribution, expressed both maternally and zygotically. Developing embryos exhibit expression in the posterior hindgut, foregut, midgut, Malpighian tubules, anal plate, Garland cells, and a subset of cells in the central nervous system. Central nervous system expression is seen in segmentally repeating in cells flanking the midline of the ventral ganglion. Isoform A and isoform B are colocalized in both the nervous system and the fluid reabsorption system.

It localises to the membrane. Functionally, plays a role in neuronal membrane excitation, important for normal response properties of the photoreceptor. Able to control excitability from either neurons or glia cells. Ine negatively regulates neuronal sodium channels. Controls neurotransmitter-mediated signaling pathways associated with the structure of the larval peripheral nerve, ine and eag control perineurial glial growth through partially redundant pathways. Isoform A and isoform B are both functional, although isoform A functions with greater efficiency. Has a role in osmolyte transport within the Malpighian tubule and hindgut. This Drosophila melanogaster (Fruit fly) protein is Sodium- and chloride-dependent GABA transporter ine.